The chain runs to 198 residues: NAD(P)H dehydrogenase (quinone) (198 aa).

The Flavodoxin-like domain occupies isoleucine 4 to valine 189. Residues serine 10 to isoleucine 15 and threonine 78 to phenylalanine 80 contribute to the FMN site. Residue tyrosine 12 coordinates NAD(+). A substrate-binding site is contributed by tryptophan 98. Residues serine 113–glycine 118 and histidine 133 contribute to the FMN site.

This sequence belongs to the WrbA family. It depends on FMN as a cofactor.

It carries out the reaction a quinone + NADH + H(+) = a quinol + NAD(+). The enzyme catalyses a quinone + NADPH + H(+) = a quinol + NADP(+). The protein is NAD(P)H dehydrogenase (quinone) of Salmonella agona (strain SL483).